Consider the following 301-residue polypeptide: MGLDGLAAYLDAYLENIVREGKSEHTVAAYRRDLQELLALLEEMPSANPSNCTRGDFVQALRRLSGRGLGERTLARKLSSWRQYCVWLVKRGLMHADPTADIKPPKQPERVPKALPQEWLNRMLDLPVDGGDPLAVRDHALFELMYGSGLRVSEIHGLNADDVYLDEAWVHVIGKGRKQRQVPLVGKSVEALKNYLPLRQTASDGKALFTGRNGTRLSQRQIQKRLAQWAAQNGDGRHVSPHMMRHSYAGHLLQASRDIRAVQELLGHSSLSTTQIYTKLDFDHIARLYDEAHPRAKRQDE.

The region spanning 1-89 is the Core-binding (CB) domain; the sequence is MGLDGLAAYL…SWRQYCVWLV (89 aa). The region spanning 110–290 is the Tyr recombinase domain; sequence RVPKALPQEW…DFDHIARLYD (181 aa). Active-site residues include Arg-151, Lys-175, His-242, Arg-245, and His-268. Tyr-277 (O-(3'-phospho-DNA)-tyrosine intermediate) is an active-site residue.

Belongs to the 'phage' integrase family. XerC subfamily. As to quaternary structure, forms a cyclic heterotetrameric complex composed of two molecules of XerC and two molecules of XerD.

The protein localises to the cytoplasm. Site-specific tyrosine recombinase, which acts by catalyzing the cutting and rejoining of the recombining DNA molecules. The XerC-XerD complex is essential to convert dimers of the bacterial chromosome into monomers to permit their segregation at cell division. It also contributes to the segregational stability of plasmids. The polypeptide is Tyrosine recombinase XerC (Neisseria meningitidis serogroup B (strain ATCC BAA-335 / MC58)).